The primary structure comprises 188 residues: Peptidyl-tRNA hydrolase (188 aa).

Tyr14 lines the tRNA pocket. Residue His19 is the Proton acceptor of the active site. The tRNA site is built by Tyr64, Asn66, and Asn112.

It belongs to the PTH family. In terms of assembly, monomer.

Its subcellular location is the cytoplasm. It catalyses the reaction an N-acyl-L-alpha-aminoacyl-tRNA + H2O = an N-acyl-L-amino acid + a tRNA + H(+). In terms of biological role, hydrolyzes ribosome-free peptidyl-tRNAs (with 1 or more amino acids incorporated), which drop off the ribosome during protein synthesis, or as a result of ribosome stalling. Its function is as follows. Catalyzes the release of premature peptidyl moieties from peptidyl-tRNA molecules trapped in stalled 50S ribosomal subunits, and thus maintains levels of free tRNAs and 50S ribosomes. This Clostridium perfringens (strain ATCC 13124 / DSM 756 / JCM 1290 / NCIMB 6125 / NCTC 8237 / Type A) protein is Peptidyl-tRNA hydrolase.